A 286-amino-acid chain; its full sequence is MVSTVSQVSRTASHDAGGSAAAGLAAMAASRVMVESQPKIAVRNLDFYYGSHKALKSISLDVHERQVLGMIGPSGCGKSTLLRILNKMYALYPGQRAEGEVLLDGENVLGKDVDVNVLRSRVGMVFQKPTPFPMSIYENIAFGIRLHEKLSKAEMDERIEWSLTRAALWSEVKDRLHTAAAGMSGGQQQRLCIARTIAVKPEVILLDEPTSALDPISTLKIEELVDELKRDFTIAIVTHNMQQAARCADRVAFFYMGELVEVGTALDMFTNPREQRTQEYITGRFG.

The ABC transporter domain maps to 40 to 281 (IAVRNLDFYY…PREQRTQEYI (242 aa)). 72–79 (GPSGCGKS) is an ATP binding site.

This sequence belongs to the ABC transporter superfamily. Phosphate importer (TC 3.A.1.7) family. In terms of assembly, the complex is composed of two ATP-binding proteins (PstB), two transmembrane proteins (PstC and PstA) and a solute-binding protein (PstS).

The protein resides in the cell inner membrane. The catalysed reaction is phosphate(out) + ATP + H2O = ADP + 2 phosphate(in) + H(+). Part of the ABC transporter complex PstSACB involved in phosphate import. Responsible for energy coupling to the transport system. This Granulibacter bethesdensis (strain ATCC BAA-1260 / CGDNIH1) protein is Phosphate import ATP-binding protein PstB.